The following is a 361-amino-acid chain: PTI1-like tyrosine-protein kinase 1 (361 aa).

The interval E16–E43 is disordered. The Protein kinase domain maps to F68–L350. ATP contacts are provided by residues I74–V82 and K96. D200 (proton acceptor) is an active-site residue.

It belongs to the protein kinase superfamily. Tyr protein kinase family. As to quaternary structure, interacts with OXI1. Autophosphorylated and phosphorylated by OXI1.

The protein resides in the cell membrane. It catalyses the reaction L-tyrosyl-[protein] + ATP = O-phospho-L-tyrosyl-[protein] + ADP + H(+). The polypeptide is PTI1-like tyrosine-protein kinase 1 (PTI11) (Arabidopsis thaliana (Mouse-ear cress)).